The sequence spans 296 residues: GTPase Era (296 aa).

Residues 3 to 170 (KSGFITIVGR…LELMVKYLPE (168 aa)) enclose the Era-type G domain. The interval 11 to 18 (GRPNVGKS) is G1. 11 to 18 (GRPNVGKS) is a binding site for GTP. Positions 37–41 (QTTRN) are G2. Positions 58-61 (DTPG) are G3. GTP contacts are provided by residues 58 to 62 (DTPGI) and 120 to 123 (NKVD). The G4 stretch occupies residues 120–123 (NKVD). Residues 149–151 (ISA) are G5. Residues 201–278 (LSQEVPHGIA…NIKIWVKVRK (78 aa)) form the KH type-2 domain.

The protein belongs to the TRAFAC class TrmE-Era-EngA-EngB-Septin-like GTPase superfamily. Era GTPase family. In terms of assembly, monomer.

It is found in the cytoplasm. The protein resides in the cell membrane. An essential GTPase that binds both GDP and GTP, with rapid nucleotide exchange. Plays a role in 16S rRNA processing and 30S ribosomal subunit biogenesis and possibly also in cell cycle regulation and energy metabolism. This Clostridium perfringens (strain ATCC 13124 / DSM 756 / JCM 1290 / NCIMB 6125 / NCTC 8237 / Type A) protein is GTPase Era.